The sequence spans 546 residues: (-)-5-epieremophilene synthase STPS2 (546 aa).

Residues Asp-299, Asp-303, Asp-442, Thr-446, and Glu-450 each coordinate Mg(2+). Residues 299-303 (DDTYD) carry the DDXXD motif motif.

Belongs to the terpene synthase family. Tpsa subfamily. In terms of assembly, monomer. Mg(2+) serves as cofactor. As to expression, highly expressed in leaves. Expressed at levels in flowers.

It carries out the reaction (2E,6E)-farnesyl diphosphate = (-)-5-epi-eremophilene + diphosphate. Its pathway is secondary metabolite biosynthesis; terpenoid biosynthesis. Functionally, sesquiterpene synthase that catalyzes the conversion of farnesyl diphosphate to (-)-5-epi-eremophilene. In Salvia miltiorrhiza (Chinese sage), this protein is (-)-5-epieremophilene synthase STPS2.